A 390-amino-acid polypeptide reads, in one-letter code: Aspartate beta-hydroxylase domain-containing protein 1 (390 aa).

Residues 1–54 are disordered; that stretch reads MKEGRGSFSVERGPRKERETAQSGMWKGNSPAGSQGAAMEGTGGELGGQGNWGP. Over 1 to 72 the chain is Cytoplasmic; the sequence is MKEGRGSFSV…RASLIMLPWP (72 aa). Residues 41 to 51 show a composition bias toward gly residues; that stretch reads GTGGELGGQGN. The chain crosses the membrane as a helical span at residues 73-95; that stretch reads LPLASSALTLLFGALTSLFLWYC. The Lumenal segment spans residues 96–390; sequence YRLGSQDMQA…ALDFVFAPDP (295 aa). Positions 116 to 143 are disordered; the sequence is RGGPVGCSEAGGPSPGGPGDPGEGPRTE. A compositionally biased stretch (gly residues) spans 128–137; it reads PSPGGPGDPG. Serine 129 bears the Phosphoserine mark.

The protein belongs to the aspartyl/asparaginyl beta-hydroxylase family.

It localises to the membrane. This Homo sapiens (Human) protein is Aspartate beta-hydroxylase domain-containing protein 1 (ASPHD1).